The sequence spans 669 residues: DNA ligase (669 aa).

NAD(+)-binding positions include 33-37, 82-83, and E115; these read DVTYD and SL. K117 serves as the catalytic N6-AMP-lysine intermediate. 4 residues coordinate NAD(+): R138, E172, K286, and K310. Zn(2+) contacts are provided by C401, C404, C417, and C422. The region spanning 589–669 is the BRCT domain; that stretch reads VDSSFLFGKK…DIKNLVNLDD (81 aa).

This sequence belongs to the NAD-dependent DNA ligase family. LigA subfamily. Mg(2+) is required as a cofactor. It depends on Mn(2+) as a cofactor.

It catalyses the reaction NAD(+) + (deoxyribonucleotide)n-3'-hydroxyl + 5'-phospho-(deoxyribonucleotide)m = (deoxyribonucleotide)n+m + AMP + beta-nicotinamide D-nucleotide.. DNA ligase that catalyzes the formation of phosphodiester linkages between 5'-phosphoryl and 3'-hydroxyl groups in double-stranded DNA using NAD as a coenzyme and as the energy source for the reaction. It is essential for DNA replication and repair of damaged DNA. This Borrelia duttonii (strain Ly) protein is DNA ligase.